A 2382-amino-acid polypeptide reads, in one-letter code: MSGGAAEKQSSTPGSLFLSPPAPAPKNGSSSDSSVGEKLGAAAADAVTGRTEEYRRRRHTMDKDSRGAAATTTTTEHRFFRRSVICDSNATALELPGLPLSLPQPSIPAAVPQSAPPEPHREETVTATATSQVAQQPPAAAAPGEQAVAGPAPSTVPSSTSKDRPVSQPSLVGSKEEPPPARSGSGGGSAKEPQEERSQQQDDIEELETKAVGMSNDGRFLKFDIEIGRGSFKTVYKGLDTETTVEVAWCELQDRKLTKSERQRFKEEAEMLKGLQHPNIVRFYDSWESTVKGKKCIVLVTELMTSGTLKTYLKRFKVMKIKVLRSWCRQILKGLQFLHTRTPPIIHRDLKCDNIFITGPTGSVKIGDLGLATLKRASFAKSVIGTPEFMAPEMYEEKYDESVDVYAFGMCMLEMATSEYPYSECQNAAQIYRRVTSGVKPASFDKVAIPEVKEIIEGCIRQNKDERYSIKDLLNHAFFQEETGVRVELAEEDDGEKIAIKLWLRIEDIKKLKGKYKDNEAIEFSFDLERDVPEDVAQEMVESGYVCEGDHKTMAKAIKDRVSLIKRKREQRQLVREEQEKKKQEESSLKQQVEQSSASQTGIKQLPSASTGIPTASTTSASVSTQVEPEEPEADQHQQLQYQQPSISVLSDGTVDSGQGSSVFTESRVSSQQTVSYGSQHEQAHSTGTVPGHIPSTVQAQSQPHGVYPPSSVAQGQSQGQPSSSSLTGVSSSQPIQHPQQQQGIQQTAPPQQTVQYSLSQTSTSSEATTAQPVSQPQAPQVLPQVSAGKQLPVSQPVPTIQGEPQIPVATQPSVVPVHSGAHFLPVGQPLPTPLLPQYPVSQIPISTPHVSTAQTGFSSLPITMAAGITQPLLTLASSATTAAIPGVSTVVPSQLPTLLQPVTQLPSQVHPQLLQPAVQSMGIPANLGQAAEVPLSSGDVLYQGFPPRLPPQYPGDSNIAPSSNVASVCIHSTVLSPPMPTEVLATPGYFPTVVQPYVESNLLVPMGGVGGQVQVSQPGGSLAQAPTTSSQQAVLESTQGVSQVAPAEPVAVAQTQATQPTTLASSVDSAHSDVASGMSDGNENVPSSSGRHEGRTTKRHYRKSVRSRSRHEKTSRPKLRILNVSNKGDRVVECQLETHNRKMVTFKFDLDGDNPEEIATIMVNNDFILAIERESFVDQVREIIEKADEMLSEDVSVEPEGDQGLESLQGKDDYGFSGSQKLEGEFKQPIPASSMPQQIGIPTSSLTQVVHSAGRRFIVSPVPESRLRESKVFPSEITDTVAASTAQSPGMNLSHSASSLSLQQAFSELRRAQMTEGPNTAPPNFSHTGPTFPVVPPFLSSIAGVPTTAAATAPVPATSSPPNDISTSVIQSEVTVPTEEGIAGVATSTGVVTSGGLPIPPVSESPVLSSVVSSITIPAVVSISTTSPSLQVPTSTSEIVVSSTALYPSVTVSATSASAGGSTATPGPKPPAVVSQQAAGSTTVGATLTSVSTTTSFPSTASQLCIQLSSSTSTPTLAETVVVSAHSLDKTSHSSTTGLAFSLSAPSSSSSPGAGVSSYISQPGGLHPLVIPSVIASTPILPQAAGPTSTPLLPQVPSIPPLVQPVANVPAVQQTLIHSQPQPALLPNQPHTHCPEVDSDTQPKAPGIDDIKTLEEKLRSLFSEHSSSGAQHASVSLETSLVIESTVTPGIPTTAVAPSKLLTSTTSTCLPPTNLPLGTVALPVTPVVTPGQVSTPVSTTTSGVKPGTAPSKPPLTKAPVLPVGTELPAGTLPSEQLPPFPGPSLTQSQQPLEDLDAQLRRTLSPEMITVTSAVGPVSMAAPTAITEAGTQPQKGVSQVKEGPVLATSSGAGVFKMGRFQVSVAADGAQKEGKNKSEDAKSVHFESSTSESSVLSSSSPESTLVKPEPNGITIPGISSDVPESAHKTTASEAKSDTGQPTKVGRFQVTTTANKVGRFSVSKTEDKITDTKKEGPVASPPFMDLEQAVLPAVIPKKEKPELSEPSHLNGPSSDPEAAFLSRDVDDGSGSPHSPHQLSSKSLPSQNLSQSLSNSFNSSYMSSDNESDIEDEDLKLELRRLRDKHLKEIQDLQSRQKHEIESLYTKLGKVPPAVIIPPAAPLSGRRRRPTKSKGSKSSRSSSLGNKSPQLSGNLSGQSAASVLHPQQTLHPPGNIPESGQNQLLQPLKPSPSSDNLYSAFTSDGAISVPSLSAPGQGTSSTNTVGATVNSQAAQAQPPAMTSSRKGTFTDDLHKLVDNWARDAMNLSGRRGSKGHMNYEGPGMARKFSAPGQLCISMTSNLGGSAPISAASATSLGHFTKSMCPPQQYGFPATPFGAQWSGTGGPAPQPLGQFQPVGTASLQNFNISNLQKSISNPPGSNLRTT.

Disordered regions lie at residues 1-81 (MSGG…RFFR) and 95-203 (LPGL…QQDD). 2 positions are modified to phosphoserine: Ser-15 and Ser-19. Basic and acidic residues predominate over residues 50–66 (RTEEYRRRRHTMDKDSR). Thr-60 bears the Phosphothreonine mark. 2 stretches are compositionally biased toward low complexity: residues 95-108 (LPGLPLSLPQPSIP) and 125-153 (VTATATSQVAQQPPAAAAPGEQAVAGPAP). Residues Ser-167 and Ser-174 each carry the phosphoserine modification. The Protein kinase domain maps to 221–479 (LKFDIEIGRG…IKDLLNHAFF (259 aa)). Ser-231 contacts ATP. 2 residues coordinate chloride: Phe-283 and Leu-299. ATP contacts are provided by residues 301 to 304 (TELM) and Lys-351. Asp-368 functions as the Proton acceptor in the catalytic mechanism. 2 residues coordinate chloride: Leu-369 and Leu-371. Phosphoserine; by autocatalysis is present on residues Ser-378 and Ser-382. An autoinhibitory domain region spans residues 488–555 (ELAEEDDGEK…VCEGDHKTMA (68 aa)). The segment covering 573–588 (QLVREEQEKKKQEESS) has biased composition (basic and acidic residues). Disordered stretches follow at residues 573–779 (QLVR…QPQA), 1018–1041 (QPGGSLAQAPTTSSQQAVLESTQG), and 1053–1119 (VAQT…SRPK). Residues 598–614 (ASQTGIKQLPSASTGIP) show a composition bias toward polar residues. Residues 615–625 (TASTTSASVST) are compositionally biased toward low complexity. Residues 628–638 (EPEEPEADQHQ) form an interaction with KLHL3 region. Over residues 637–689 (HQQLQYQQPSISVLSDGTVDSGQGSSVFTESRVSSQQTVSYGSQHEQAHSTGT) the composition is skewed to polar residues. Low complexity predominate over residues 709–779 (PPSSVAQGQS…TAQPVSQPQA (71 aa)). Polar residues predominate over residues 1025 to 1041 (QAPTTSSQQAVLESTQG). Residues 1053–1077 (VAQTQATQPTTLASSVDSAHSDVAS) show a composition bias toward low complexity. Residues 1080 to 1090 (SDGNENVPSSS) show a composition bias toward polar residues. Over residues 1098–1119 (TKRHYRKSVRSRSRHEKTSRPK) the composition is skewed to basic residues. The RFXV motif 1 signature appears at 1257–1260 (RFIV). Ser-1261 carries the post-translational modification Phosphoserine. Composition is skewed to low complexity over residues 1457 to 1467 (SASAGGSTATP) and 1733 to 1745 (QVSTPVSTTTSGV). 2 disordered regions span residues 1457-1476 (SASAGGSTATPGPKPPAVVS) and 1733-1790 (QVST…TQSQ). Thr-1848 carries the post-translational modification Phosphothreonine. Residues 1859 to 1862 (RFQV) carry the RFXV motif 2 motif. The interval 1866 to 1948 (ADGAQKEGKN…QPTKVGRFQV (83 aa)) is disordered. Over residues 1869-1884 (AQKEGKNKSEDAKSVH) the composition is skewed to basic and acidic residues. A compositionally biased stretch (low complexity) spans 1887 to 1905 (SSTSESSVLSSSSPESTLV). A compositionally biased stretch (polar residues) spans 1927–1940 (KTTASEAKSDTGQP). 2 consecutive short sequence motifs (RFXV motif) follow at residues 1945–1948 (RFQV) and 1957–1960 (RFSV). Ser-1978, Ser-2002, Ser-2011, Ser-2012, Ser-2027, Ser-2029, and Ser-2032 each carry phosphoserine. The segment covering 1994–2003 (PKKEKPELSE) has biased composition (basic and acidic residues). 2 disordered regions span residues 1994–2069 (PKKE…DIED) and 2101–2196 (LYTK…NLYS). Low complexity predominate over residues 2035–2062 (QLSSKSLPSQNLSQSLSNSFNSSYMSSD). A Phosphoserine modification is found at Ser-2121. The span at 2122-2134 (GRRRRPTKSKGSK) shows a compositional bias: basic residues. Low complexity predominate over residues 2135–2145 (SSRSSSLGNKS). Composition is skewed to polar residues over residues 2146 to 2167 (PQLSGNLSGQSAASVLHPQQTL) and 2175 to 2196 (ESGQNQLLQPLKPSPSSDNLYS). The segment at 2241–2261 (SRKGTFTDDLHKLVDNWARDA) is amphipathic alpha-helix. Phosphoserine occurs at positions 2270 and 2286. The interval 2332–2352 (PFGAQWSGTGGPAPQPLGQFQ) is disordered. Phosphoserine occurs at positions 2370 and 2372.

It belongs to the protein kinase superfamily. Ser/Thr protein kinase family. WNK subfamily. In terms of assembly, interacts with WNK3. Interacts with WNK4; inhibiting the activity of WNK4. Interacts with SGK1; promoting its activation. Associates with the mTORC2 complex. Interacts with UVRAG. Interacts (via amphipathic alpha-helix region) with EMC2; promoting the ER membrane protein complex assembly. Interacts with isoform 1; inhibiting isoform 1 activity. The cofactor is Mg(2+). Autophosphorylated at Ser-378 and Ser-382, promoting its activity. Autophosphorylation at Ser-382 is inhibited by intracellular calcium. Phosphorylation at Thr-60 increases ability to activate SGK1. In terms of processing, ubiquitinated by the BCR(KLHL3) complex, leading to its degradation. Also ubiquitinated by the BCR(KLHL2) complex. Post-translationally, may be O-glycosylated. In terms of tissue distribution, widely expressed, with highest levels observed in the testis, heart, kidney and skeletal muscle. As to expression, strong expression in dorsal root ganglia and spinal cord. This isoform is kidney-specific and specifically expressed in the distal convoluted tubule (DCT) and connecting tubule (CNT) of the nephron.

The protein localises to the cytoplasm. The protein resides in the nucleus. Its subcellular location is the cytoskeleton. It is found in the spindle. It carries out the reaction L-seryl-[protein] + ATP = O-phospho-L-seryl-[protein] + ADP + H(+). It catalyses the reaction L-threonyl-[protein] + ATP = O-phospho-L-threonyl-[protein] + ADP + H(+). Activated in response to hyperosmotic stress: cell shrinkage promotes formation of a membraneless compartment that concentrates WNK1 with its substrates, OXSR1/OSR1 and STK39/SPAK. Activation requires autophosphorylation of Ser-382 and, to a lower extent, Ser-378. Autophosphorylation and subsequent activation is inhibited by increases in intracellular ionic strength: Cl(-) potently inhibits WNK1 kinase activity via direct binding. Also inhibited by K(+) ions. Inhibited by small compounds staurosporine, tyrphostin 47, as well as Src tyrosine kinase inhibitors PP1 and PP2. Its function is as follows. Serine/threonine-protein kinase component of the WNK1-SPAK/OSR1 kinase cascade, which acts as a key regulator of blood pressure and regulatory volume increase by promoting ion influx. WNK1 mediates regulatory volume increase in response to hyperosmotic stress by acting as a molecular crowding sensor, which senses cell shrinkage and mediates formation of a membraneless compartment by undergoing liquid-liquid phase separation. The membraneless compartment concentrates WNK1 with its substrates, OXSR1/OSR1 and STK39/SPAK, promoting WNK1-dependent phosphorylation and activation of downstream kinases OXSR1/OSR1 and STK39/SPAK. Following activation, OXSR1/OSR1 and STK39/SPAK catalyze phosphorylation of ion cotransporters SLC12A1/NKCC2, SLC12A2/NKCC1, SLC12A5/KCC2 and SLC12A6/KCC3, regulating their activity. Phosphorylation of Na-K-Cl cotransporters SLC12A2/NKCC1 and SLC12A2/NKCC1 promote their activation and ion influx; simultaneously, phosphorylation of K-Cl cotransporters SLC12A5/KCC2 and SLC12A6/KCC3 inhibit their activity, blocking ion efflux. Also acts as a regulator of angiogenesis in endothelial cells via activation of OXSR1/OSR1 and STK39/SPAK: activation of OXSR1/OSR1 regulates chemotaxis and invasion, while STK39/SPAK regulates endothelial cell proliferation. Also acts independently of the WNK1-SPAK/OSR1 kinase cascade by catalyzing phosphorylation of other substrates, such as SYT2, PCF11 and NEDD4L. Mediates phosphorylation of SYT2, regulating SYT2 association with phospholipids and membrane-binding. Regulates mRNA export in the nucleus by mediating phosphorylation of PCF11, thereby decreasing the association between PCF11 and POLR2A/RNA polymerase II and promoting mRNA export to the cytoplasm. Acts as a negative regulator of autophagy. Required for the abscission step during mitosis, independently of the WNK1-SPAK/OSR1 kinase cascade. May also play a role in actin cytoskeletal reorganization. Also acts as a scaffold protein independently of its protein kinase activity: negatively regulates cell membrane localization of various transporters and channels, such as SLC4A4, SLC26A6, SLC26A9, TRPV4 and CFTR. Involved in the regulation of epithelial Na(+) channel (ENaC) by promoting activation of SGK1 in a kinase-independent manner: probably acts as a scaffold protein that promotes the recruitment of SGK1 to the mTORC2 complex in response to chloride, leading to mTORC2-dependent phosphorylation and activation of SGK1. Acts as an assembly factor for the ER membrane protein complex independently of its protein kinase activity: associates with EMC2 in the cytoplasm via its amphipathic alpha-helix, and prevents EMC2 ubiquitination and subsequent degradation, thereby promoting EMC2 stabilization. Functionally, kinase-defective isoform specifically expressed in kidney, which acts as a dominant-negative regulator of the longer isoform 1. Does not directly inhibit WNK4 and has no direct effect on sodium and chloride ion transport. Down-regulates sodium-chloride cotransporter activity indirectly by inhibiting isoform 1, it associates with isoform 1 and attenuates its kinase activity. In kidney, may play an important role regulating sodium and potassium balance. This is Serine/threonine-protein kinase WNK1 from Homo sapiens (Human).